A 122-amino-acid polypeptide reads, in one-letter code: Large ribosomal subunit protein uL14 (122 aa).

This sequence belongs to the universal ribosomal protein uL14 family. Part of the 50S ribosomal subunit. Forms a cluster with proteins L3 and L19. In the 70S ribosome, L14 and L19 interact and together make contacts with the 16S rRNA in bridges B5 and B8.

Its function is as follows. Binds to 23S rRNA. Forms part of two intersubunit bridges in the 70S ribosome. In Saccharopolyspora erythraea (strain ATCC 11635 / DSM 40517 / JCM 4748 / NBRC 13426 / NCIMB 8594 / NRRL 2338), this protein is Large ribosomal subunit protein uL14.